We begin with the raw amino-acid sequence, 1136 residues long: Pesticidal crystal protein Cry4B protoxin (1136 aa).

The segment at 84 to 282 (TPERVWNDFM…PADKIDNTKL (199 aa)) is domain I. Residues 283 to 466 (SKTEFTREIY…SNRVSFAWTH (184 aa)) form a domain II region. The segment at 467–641 (KIVDPNNQIY…PITQSVLDET (175 aa)) is domain III.

This sequence belongs to the delta endotoxin family. As to quaternary structure, in the presence of micelles active toxin forms oligomers that can be fit into cryo-EM maps as trimers. Binds to host (A.gambiae) cadherin AgCad1 (also called BT-R3), probably on the cell surface. Activated toxin may bind its host AgCad1 receptor as a monomer, but also forms an oligomer that is not active. Mg(2+) serves as cofactor. Post-translationally, treatment of recombinant protein with A.aegypti 3rd instar larvae midgut extract for 1 hour yields major bands of 72 and 45 kDa, the combined proteins are toxic to mosquitoes. Longer digestion, which removes the 72 kDa protein, yields a non-toxic preparation. Proteolysis by yields a 65 kDa toxic protein and 48 and 17 kDa fragments which are not toxic. In terms of tissue distribution, host (A.gambiae) larval midgut; binds to host brush border membranes, probably to cadherin-AgCad1 (Cad1, also called BT-R3).

Its subcellular location is the spore. Toxic activity on Trichoplusia ni insect cells stably transfected with the AgCad1/BT-R3 receptor leads to oncosis, cell death characterized by cell swelling, membrane blebbing and depletion of energy reserves. Cell death is blocked by EDTA (but not EGTA) and is partially prevented by pretreatment with NF449 (inhibits G-s-alpha-60A and adenylyl cyclase, AC) and 2',5'-dideoxyadenosine 3'-diphosphate (ddADP, inhibits AC), while H-89 and PKAI 14-22 (both inhibit protein kinase A), ouabain (inhibits Na+/K+-ATPase) and a cell exocytosis inhibitor (Exo1) nearly completely prevent the action of the toxin in this system. The cAMP analog pCPT-cAMP and the AC activator FSK enhance toxicity. A pesticidal protein active against Aedes and Anopheles mosquito species; activity on Culex species is strain dependent. It remains toxic to permethrin-resistant strains of A.gambiae. Following activation of the protoxin by mosquito larvae midgut extract (or by chymotrypsin or trypsin treatment) it becomes insecticidal. Causes mosquito cell death by activating a host G-protein-coupled receptor which subsequently activates adenylyl cyclase and increases cAMP production. cAMP activates protein kinase A which sets off a series of downstream events which includes increased exocytosis (probably bringing more receptor to the cell membrane), Na+/K+-ATPase activation and eventual host cell death. Another group suggests that alkaline phosphatase serves as the insect receptor and that the protein forms pores in insect cell membranes. The protein is Pesticidal crystal protein Cry4B protoxin of Bacillus thuringiensis subsp. israelensis.